Reading from the N-terminus, the 372-residue chain is Saccharopine dehydrogenase [NAD(+), L-lysine-forming] (372 aa).

Positions 17 and 76 each coordinate L-saccharopine. K76 serves as the catalytic Proton acceptor. The Proton donor role is filled by H95. Q100 contributes to the L-saccharopine binding site. R129 contributes to the NAD(+) binding site. R130 and F134 together coordinate L-saccharopine. NAD(+) contacts are provided by residues 202–203, D226, T230, Y250, and V277; that span reads GR. A disulfide bridge connects residues C204 and C248. 278–280 contributes to the L-saccharopine binding site; the sequence is SAD. 317-320 is a binding site for NAD(+); sequence IDHL. The short motif at 370-372 is the Microbody targeting signal element; the sequence is SKL.

It belongs to the AlaDH/PNT family. In terms of assembly, monomer.

Its subcellular location is the peroxisome. It carries out the reaction L-saccharopine + NAD(+) + H2O = L-lysine + 2-oxoglutarate + NADH + H(+). Its pathway is amino-acid biosynthesis; L-lysine biosynthesis via AAA pathway; L-lysine from L-alpha-aminoadipate (fungal route): step 3/3. Its function is as follows. Catalyzes the NAD(+)-dependent cleavage of saccharopine to L-lysine and 2-oxoglutarate, the final step in the alpha-aminoadipate (AAA) pathway for lysin biosynthesis. This Candida glabrata (strain ATCC 2001 / BCRC 20586 / JCM 3761 / NBRC 0622 / NRRL Y-65 / CBS 138) (Yeast) protein is Saccharopine dehydrogenase [NAD(+), L-lysine-forming] (LYS1).